A 985-amino-acid polypeptide reads, in one-letter code: Ras and Rab interactor 3 (985 aa).

The segment at 1-24 (MIRHAGAPARGDPTGPVPVVGKGE) is disordered. In terms of domain architecture, SH2 spans 63 to 158 (WLQLSLGQAE…LLPFTLRLPQ (96 aa)). Disordered stretches follow at residues 183–202 (SLNP…DRAP), 251–293 (QPPL…QPCS), and 315–531 (PPVP…KGSL). A compositionally biased stretch (basic and acidic residues) spans 189–201 (ERGKPAEPPRDRA). Composition is skewed to pro residues over residues 278 to 288 (RRPPPPPPVLP) and 315 to 336 (PPVP…PNQP). Positions 424 to 442 (DTPRESTEQGQDTEVKASD) are enriched in basic and acidic residues. The interval 587 to 732 (FSSMFHAFLS…TTTDLGVTTS (146 aa)) is interaction with RAB5B. The region spanning 703-846 (HSKDGSLQQL…IKSYDKITVT (144 aa)) is the VPS9 domain. The region spanning 877 to 963 (QDFICVSYLE…RDFHFVYRPL (87 aa)) is the Ras-associating domain.

It belongs to the RIN (Ras interaction/interference) family. In terms of assembly, interacts with CD2AP, RAB5B, RAB31 and BIN1. In terms of tissue distribution, widely expressed.

It is found in the cytoplasm. Its subcellular location is the cytoplasmic vesicle. It localises to the early endosome. Functionally, ras effector protein that functions as a guanine nucleotide exchange (GEF) for RAB5B and RAB31, by exchanging bound GDP for free GTP. Required for normal RAB31 function. This is Ras and Rab interactor 3 (RIN3) from Homo sapiens (Human).